Reading from the N-terminus, the 51-residue chain is Large ribosomal subunit protein bL33 (51 aa).

It belongs to the bacterial ribosomal protein bL33 family. Part of the 50S ribosomal subunit. Cross-links to the P and E site tRNAs.

The chain is Large ribosomal subunit protein bL33 from Pseudomonas aeruginosa (strain ATCC 15692 / DSM 22644 / CIP 104116 / JCM 14847 / LMG 12228 / 1C / PRS 101 / PAO1).